We begin with the raw amino-acid sequence, 275 residues long: Mitochondrial fission factor homolog A (275 aa).

Residues 1–255 are Cytoplasmic-facing; the sequence is MAEVNRIHYE…ENKERAKREM (255 aa). Residues 100–171 form a disordered region; the sequence is DFLEPEPAAN…PLISPEDSQN (72 aa). Residues 114 to 130 show a composition bias toward basic and acidic residues; sequence PREEMKSHFRSRREQCR. Residues 131 to 142 show a composition bias toward polar residues; that stretch reads SENSTMRRNGQI. Positions 223–253 form a coiled coil; the sequence is LTDAASLRRQIIKLNRRLQLLEHENKERAKR. A helical; Anchor for type IV membrane protein transmembrane segment spans residues 256–273; it reads VMYSLTVAFWLVNSWIWL. Topologically, residues 274 to 275 are extracellular; the sequence is RR.

The protein belongs to the Tango11 family.

Its subcellular location is the mitochondrion outer membrane. The protein resides in the peroxisome. Its function is as follows. Plays a role in mitochondrial and peroxisomal fission. Promotes the recruitment and association of the fission mediator dynamin-related protein 1 (DNM1L) to the mitochondrial surface. This chain is Mitochondrial fission factor homolog A, found in Danio rerio (Zebrafish).